The sequence spans 98 residues: NADH-ubiquinone oxidoreductase chain 4L (98 aa).

3 helical membrane-spanning segments follow: residues 2-22, 29-49, and 61-81; these read PSISININLAFAAALLGMLMF, SLLCLEGMMLSMFTLSTLIIL, and ILLLVFAACEAAIGLALLVTV.

The protein belongs to the complex I subunit 4L family. In terms of assembly, core subunit of respiratory chain NADH dehydrogenase (Complex I) which is composed of 45 different subunits.

Its subcellular location is the mitochondrion inner membrane. It catalyses the reaction a ubiquinone + NADH + 5 H(+)(in) = a ubiquinol + NAD(+) + 4 H(+)(out). In terms of biological role, core subunit of the mitochondrial membrane respiratory chain NADH dehydrogenase (Complex I) which catalyzes electron transfer from NADH through the respiratory chain, using ubiquinone as an electron acceptor. Part of the enzyme membrane arm which is embedded in the lipid bilayer and involved in proton translocation. The protein is NADH-ubiquinone oxidoreductase chain 4L (MT-ND4L) of Microcebus mamiratra (Claire's mouse lemur).